Reading from the N-terminus, the 312-residue chain is MKVAVLGAAGGIGQALALLLKTQLPSGSELSLYDIAPVTPGVAVDLSHIPTAVKIKGFSGEDATPALHGADVVLISAGVARKPGMDRSDLFNVNAGIVRNLIQQVATTCPKACIGIITNPVNTTVAIAAEVLKKAGVYDKNKLFGVTSLDIIRSNTFVAELKGKQPEELNVPVIGGHSGVTILPLLSQIPGVSFTDQEVADLTKRIQNAGTEVVEAKAGGGSATLSMGQAAARFGLSLVRALQGEKGVVECAYVEGDGKYARFFAQPLVLGKNGVEERKDIGTLSAFEQKALDDMLDVLHKDIELGEKFINN.

Residues 7–13 and Asp34 each bind NAD(+); that span reads GAAGGIG. Substrate is bound by residues Arg81 and Arg87. NAD(+)-binding positions include Asn94 and 117 to 119; that span reads ITN. The substrate site is built by Asn119 and Arg153. His177 functions as the Proton acceptor in the catalytic mechanism. Residue Met227 participates in NAD(+) binding.

The protein belongs to the LDH/MDH superfamily. MDH type 1 family. Homodimer.

The enzyme catalyses (S)-malate + NAD(+) = oxaloacetate + NADH + H(+). Functionally, catalyzes the reversible oxidation of malate to oxaloacetate. In Serratia proteamaculans (strain 568), this protein is Malate dehydrogenase.